Consider the following 81-residue polypeptide: Defensin-like protein 153 (81 aa).

A signal peptide spans 1 to 26 (MKNVSQVSVAVLLIFSILVLGIGVQG). 4 cysteine pairs are disulfide-bonded: C30–C81, C41–C60, C46–C75, and C50–C77.

Belongs to the DEFL family.

It localises to the secreted. The sequence is that of Defensin-like protein 153 (LCR31) from Arabidopsis thaliana (Mouse-ear cress).